We begin with the raw amino-acid sequence, 100 residues long: Large ribosomal subunit protein eL30 (100 aa).

Belongs to the eukaryotic ribosomal protein eL30 family.

The polypeptide is Large ribosomal subunit protein eL30 (rpl30e) (Aeropyrum pernix (strain ATCC 700893 / DSM 11879 / JCM 9820 / NBRC 100138 / K1)).